Consider the following 319-residue polypeptide: tRNA-cytidine(32) 2-sulfurtransferase (319 aa).

Positions 49–54 (SGGKDS) match the PP-loop motif motif. Positions 124, 127, and 215 each coordinate [4Fe-4S] cluster. The disordered stretch occupies residues 276–319 (DGDTAFDKEEFRDPAPDADDVEDAPKKRTISILDSRGKESGCGA). Basic and acidic residues-rich tracts occupy residues 280–290 (AFDKEEFRDPA) and 310–319 (SRGKESGCGA).

This sequence belongs to the TtcA family. Homodimer. Mg(2+) is required as a cofactor. The cofactor is [4Fe-4S] cluster.

Its subcellular location is the cytoplasm. The catalysed reaction is cytidine(32) in tRNA + S-sulfanyl-L-cysteinyl-[cysteine desulfurase] + AH2 + ATP = 2-thiocytidine(32) in tRNA + L-cysteinyl-[cysteine desulfurase] + A + AMP + diphosphate + H(+). The protein operates within tRNA modification. Its function is as follows. Catalyzes the ATP-dependent 2-thiolation of cytidine in position 32 of tRNA, to form 2-thiocytidine (s(2)C32). The sulfur atoms are provided by the cysteine/cysteine desulfurase (IscS) system. This Chromobacterium violaceum (strain ATCC 12472 / DSM 30191 / JCM 1249 / CCUG 213 / NBRC 12614 / NCIMB 9131 / NCTC 9757 / MK) protein is tRNA-cytidine(32) 2-sulfurtransferase.